Reading from the N-terminus, the 295-residue chain is Pyridoxal 5'-phosphate synthase subunit PdxS (295 aa).

D-ribose 5-phosphate is bound at residue D23. K80 serves as the catalytic Schiff-base intermediate with D-ribose 5-phosphate. Residue G152 coordinates D-ribose 5-phosphate. Position 164 (R164) interacts with D-glyceraldehyde 3-phosphate. D-ribose 5-phosphate contacts are provided by residues G213 and 234-235; that span reads GS.

The protein belongs to the PdxS/SNZ family. In terms of assembly, in the presence of PdxT, forms a dodecamer of heterodimers.

It catalyses the reaction aldehydo-D-ribose 5-phosphate + D-glyceraldehyde 3-phosphate + L-glutamine = pyridoxal 5'-phosphate + L-glutamate + phosphate + 3 H2O + H(+). Its pathway is cofactor biosynthesis; pyridoxal 5'-phosphate biosynthesis. Catalyzes the formation of pyridoxal 5'-phosphate from ribose 5-phosphate (RBP), glyceraldehyde 3-phosphate (G3P) and ammonia. The ammonia is provided by the PdxT subunit. Can also use ribulose 5-phosphate and dihydroxyacetone phosphate as substrates, resulting from enzyme-catalyzed isomerization of RBP and G3P, respectively. This Methanosphaera stadtmanae (strain ATCC 43021 / DSM 3091 / JCM 11832 / MCB-3) protein is Pyridoxal 5'-phosphate synthase subunit PdxS.